The following is a 663-amino-acid chain: Protein MNE1 (663 aa).

The chain is Protein MNE1 (MNE1) from Saccharomyces cerevisiae (strain ATCC 204508 / S288c) (Baker's yeast).